The following is a 458-amino-acid chain: Ammonium transporter Rh type B (458 aa).

The Cytoplasmic portion of the chain corresponds to 1 to 13 (MAGSPSRAAGRRL). The helical transmembrane segment at 14–34 (QLPLLCLFLQGATAVLFAVFV) threads the bilayer. Over 35–61 (RYNHKTDAALWHRGNYSNADNEFYFRY) the chain is Extracellular. Residue Asn-49 is glycosylated (N-linked (GlcNAc...) asparagine). Residues 62–82 (PSFQDVHAMVFVGFGFLMVFL) form a helical membrane-spanning segment. At 83–86 (QRYG) the chain is on the cytoplasmic side. Residues 87 to 107 (FSSVGFTFLLAAFALQWSTLV) traverse the membrane as a helical segment. Residues 108–124 (QGFLHSFHSGHIHVGVE) lie on the Extracellular side of the membrane. A helical transmembrane segment spans residues 125-145 (SMINADFCAGAVLISFGAVLG). Topologically, residues 146 to 149 (KTGP) are cytoplasmic. A helical membrane pass occupies residues 150–170 (AQLLLMALLEVVLFGINEFVL). Topologically, residues 171 to 178 (LHLLGVRD) are extracellular. A helical membrane pass occupies residues 179 to 201 (AGGSMTIHTFGAYFGLVLSRVLY). Topologically, residues 202 to 219 (RPQLEKSKHRQGSVYHSD) are cytoplasmic. Residues 220 to 240 (LFAMIGTIFLWIFWPSFNSAL) form a helical membrane-spanning segment. The Extracellular portion of the chain corresponds to 241 to 251 (TALGAGQHRTA). A helical membrane pass occupies residues 252–272 (LNTYYSLAASTLGTFALSALV). Over 273-282 (GEDGRLDMVH) the chain is Cytoplasmic. Residues 283–303 (IQNAALAGGVVVGTSSEMMLT) traverse the membrane as a helical segment. A topological domain (extracellular) is located at residue Pro-304. A helical transmembrane segment spans residues 305 to 325 (FGALAAGFLAGTVSTLGYKFF). Residues 326–346 (TPILESKFKVQDTCGVHNLHG) are Cytoplasmic-facing. Residues 347-367 (MPGVLGALLGVLVAGLATHEA) traverse the membrane as a helical segment. Residues 368-393 (YGDGLESVFPLIAEGQRSATSQAMLQ) are Extracellular-facing. The chain crosses the membrane as a helical span at residues 394 to 414 (LFGLFVTLMFASVGGGLGGLL). Residues 415–458 (LKLPFLDSPPDSQCYEDQVHWQVPGEHEDEAQRPLRVEEADTQA) are Cytoplasmic-facing. Residues 416–424 (KLPFLDSPP) form an interaction with ANK3 region. A Basolateral sorting signal motif is present at residues 429–432 (YEDQ). The tract at residues 439–458 (GEHEDEAQRPLRVEEADTQA) is disordered. Residues 444 to 458 (EAQRPLRVEEADTQA) show a composition bias toward basic and acidic residues.

It belongs to the ammonium transporter (TC 2.A.49) family. Rh subfamily. Interacts (via C-terminus) with ANK2 and ANK3; required for targeting to the basolateral membrane. In terms of processing, N-glycosylated.

The protein localises to the cell membrane. It localises to the basolateral cell membrane. It catalyses the reaction NH4(+)(in) = NH4(+)(out). It carries out the reaction methylamine(out) = methylamine(in). The enzyme catalyses CO2(out) = CO2(in). In terms of biological role, ammonium transporter involved in the maintenance of acid-base homeostasis. Transports ammonium and its related derivative methylammonium across the basolateral plasma membrane of epithelial cells likely contributing to renal transepithelial ammonia transport and ammonia metabolism. May transport either NH4(+) or NH3 ammonia species predominantly mediating an electrogenic NH4(+) transport. May act as a CO2 channel providing for renal acid secretion. The protein is Ammonium transporter Rh type B (RHBG) of Papio hamadryas (Hamadryas baboon).